Reading from the N-terminus, the 161-residue chain is MSNSSKKHLDLPYRPGVGMMILNANNHIFVGKRIDTKISAWQMPQGGIVPGETPSIAAMREMLEEIGSDKGYIIAESKFWYSYDVPSFLIPKLWNGNFRGQKQRWFLIRFTGNNEDININTSNPEFDQWRWASLDELLSIIIPFKRKLYQAVVKEFESLIQ.

The region spanning 12-154 is the Nudix hydrolase domain; the sequence is PYRPGVGMMI…KRKLYQAVVK (143 aa). Residues 46–67 carry the Nudix box motif; it reads GGIVPGETPSIAAMREMLEEIG.

The protein belongs to the Nudix hydrolase family. RppH subfamily. It depends on a divalent metal cation as a cofactor.

Accelerates the degradation of transcripts by removing pyrophosphate from the 5'-end of triphosphorylated RNA, leading to a more labile monophosphorylated state that can stimulate subsequent ribonuclease cleavage. The polypeptide is RNA pyrophosphohydrolase (Rickettsia conorii (strain ATCC VR-613 / Malish 7)).